Consider the following 613-residue polypeptide: Putative adenosylhomocysteinase 3 (613 aa).

2 stretches are compositionally biased toward low complexity: residues 1–14 (MSVQ…AAKV) and 35–44 (AAAVGAMVPP). Residues 1 to 186 (MSVQVVSAAA…KQQKNSKGSS (186 aa)) form a disordered region. Position 2 is an N-acetylserine (S2). The LISN domain, inhibits interaction with ITPR1 stretch occupies residues 2–111 (SVQVVSAAAA…DGGEALVSPD (110 aa)). A compositionally biased stretch (pro residues) spans 52-68 (APAPAPAAERPPAPGPG). A compositionally biased stretch (low complexity) spans 70–80 (GPTAALSPAAG). At S109 the chain carries Phosphoserine. Residues 137-146 (RPTKIGRRSL) show a composition bias toward basic residues. Residues 147-166 (SRSISQSSTDSYSSAASYTD) are compositionally biased toward low complexity. Residues S151, S154, S157, and S160 each carry the phosphoserine modification. Substrate contacts are provided by T238, D312, and E337. 338–340 (SVT) serves as a coordination point for NAD(+). Substrate is bound by residues K367 and D371. NAD(+) contacts are provided by residues N372, 403 to 408 (GEVGKG), E424, N459, 480 to 482 (MGH), and N527.

The protein belongs to the adenosylhomocysteinase family. Homotetramer. Forms heteromultimers with AHCYL1 (via the C-terminal region). Interacts with ITPR1; with lower affinity than AHCYL1 and maybe via ITPR1. Interacts with SLC4A4. Interacts with ZCCHC4. It depends on NAD(+) as a cofactor. Post-translationally, phosphorylated during neuronal differentiation at the LISN domain. Highly expressed in cerebrum, cerebellum and kidney. Also expressed in thymus, spleen, testis, ovary and, at lower, levels in lung and liver (at protein level). In cerebellum, expressed in interneurons.

It is found in the cytoplasm. Its subcellular location is the microsome. It catalyses the reaction S-adenosyl-L-homocysteine + H2O = L-homocysteine + adenosine. It participates in amino-acid biosynthesis; L-homocysteine biosynthesis; L-homocysteine from S-adenosyl-L-homocysteine: step 1/1. Its function is as follows. May regulate the electrogenic sodium/bicarbonate cotransporter SLC4A4 activity and Mg(2+)-sensitivity. On the contrary of its homolog AHCYL1, does not regulate ITPR1 sensitivity to inositol 1,4,5-trisphosphate. This chain is Putative adenosylhomocysteinase 3 (Ahcyl2), found in Mus musculus (Mouse).